The chain runs to 166 residues: Large ribosomal subunit protein uL10 (166 aa).

It belongs to the universal ribosomal protein uL10 family. In terms of assembly, part of the ribosomal stalk of the 50S ribosomal subunit. The N-terminus interacts with L11 and the large rRNA to form the base of the stalk. The C-terminus forms an elongated spine to which L12 dimers bind in a sequential fashion forming a multimeric L10(L12)X complex.

Functionally, forms part of the ribosomal stalk, playing a central role in the interaction of the ribosome with GTP-bound translation factors. The polypeptide is Large ribosomal subunit protein uL10 (Bacillus licheniformis (strain ATCC 14580 / DSM 13 / JCM 2505 / CCUG 7422 / NBRC 12200 / NCIMB 9375 / NCTC 10341 / NRRL NRS-1264 / Gibson 46)).